We begin with the raw amino-acid sequence, 528 residues long: Chaperonin GroEL, chloroplastic (528 aa).

Residues 29–32 (TLGP), 86–90 (DGTTT), Gly-414, 480–482 (DAA), and Asp-496 each bind ATP.

It belongs to the chaperonin (HSP60) family. In terms of assembly, forms a cylinder of 14 subunits composed of two heptameric rings stacked back-to-back. Interacts with the co-chaperonin GroES.

It is found in the plastid. It localises to the chloroplast. The enzyme catalyses ATP + H2O + a folded polypeptide = ADP + phosphate + an unfolded polypeptide.. In terms of biological role, together with its co-chaperonin GroES, plays an essential role in assisting protein folding. The GroEL-GroES system forms a nano-cage that allows encapsulation of the non-native substrate proteins and provides a physical environment optimized to promote and accelerate protein folding. This chain is Chaperonin GroEL, chloroplastic, found in Pyropia yezoensis (Susabi-nori).